The chain runs to 125 residues: Probable mercury resistance operon repressor (125 aa).

Positions 15 to 109 (VPCTHPDTTA…LARCLAADNA (95 aa)) constitute an HTH arsR-type domain. The H-T-H motif DNA-binding region spans 49–68 (SAECVEHAGISQPRVSVHLS). Residues Cys-69, Cys-73, and Cys-114 each contribute to the Hg(2+) site.

Negatively regulates the mercuric reductase merA and the organolyase merB in the absence of mercuric ions. In Streptomyces lividans, this protein is Probable mercury resistance operon repressor (merR).